Here is a 917-residue protein sequence, read N- to C-terminus: DNA mismatch repair protein spellchecker 1 (917 aa).

667 to 674 (GPNMGGKS) serves as a coordination point for ATP.

It belongs to the DNA mismatch repair MutS family. As to quaternary structure, heterodimer of Msh2/Spel and Msh6.

It localises to the nucleus. Involved in postreplication mismatch repair. Binds specifically to DNA containing mismatched nucleotides thus providing a target for the excision repair processes characteristic of postreplication mismatch repair. This Drosophila melanogaster (Fruit fly) protein is DNA mismatch repair protein spellchecker 1 (spel1).